Reading from the N-terminus, the 500-residue chain is Plasma protease C1 inhibitor (500 aa).

The N-terminal stretch at 1-22 is a signal peptide; that stretch reads MASRLTLLTLLLLLLAGDRASS. Positions 20-31 are enriched in low complexity; sequence ASSNPNATSSSS. The interval 20-43 is disordered; the sequence is ASSNPNATSSSSQDPESLQDRGEG. A glycan (N-linked (GlcNAc...) (complex) asparagine) is linked at Asn-25. O-linked (GalNAc...) threonine glycosylation is found at Thr-47 and Thr-48. O-linked (GalNAc...) serine glycosylation is present at Ser-64. The tract at residues 65–118 is disordered; sequence LPTTNSTTNSATKITANTTDEPTTQPTTEPTTQPTIQPTQPTTQLPTDSPTQPT. Residues 67–118 are compositionally biased toward low complexity; that stretch reads TTNSTTNSATKITANTTDEPTTQPTTEPTTQPTIQPTQPTTQLPTDSPTQPT. N-linked (GlcNAc...) asparagine glycosylation occurs at Asn-69. Residue Thr-71 is glycosylated (O-linked (GalNAc...) threonine). The N-linked (GlcNAc...) asparagine glycan is linked to Asn-81. Residues Thr-83, Thr-88, Thr-92, and Thr-96 are each glycosylated (O-linked (GalNAc...) threonine). 7 consecutive repeat copies span residues 85–88, 89–92, 93–96, 97–100, 101–104, 105–108, and 116–119. The 7 X 4 AA tandem repeats of [QE]-P-T-[TQ] stretch occupies residues 85–119; the sequence is EPTTQPTTEPTTQPTIQPTQPTTQLPTDSPTQPTT. 2 disulfides stabilise this stretch: Cys-123-Cys-428 and Cys-130-Cys-205. N-linked (GlcNAc...) (complex) asparagine glycans are attached at residues Asn-238 and Asn-253. Asn-272 is a glycosylation site (N-linked (GlcNAc...) asparagine; in variant TA). Asn-352 carries N-linked (GlcNAc...) (complex) asparagine glycosylation.

The protein belongs to the serpin family. In terms of assembly, interacts with MASP1. (Microbial infection) Binds to E.coli stcE which allows localization of SERPING1 to cell membranes thus protecting the bacteria against complement-mediated lysis. Post-translationally, highly glycosylated (49%) with N- and O-glycosylation. O-glycosylated with core 1 or possibly core 8 glycans. N-glycan heterogeneity at Asn-25: Hex5HexNAc4 (minor), dHex1Hex5HexNAc4 (minor), Hex6HexNAc5 (major) and dHex1Hex6HexNAc5 (minor). In terms of processing, cleaved by C1S in vitro. (Microbial infection) Can be proteolytically cleaved by E.coli stcE.

Its subcellular location is the secreted. In terms of biological role, serine protease inhibitor, which acrs as a regulator of the classical complement pathway. Forms a proteolytically inactive stoichiometric complex with the C1r or C1s proteases. May also regulate blood coagulation, fibrinolysis and the generation of kinins. Very efficient inhibitor of FXIIa. Inhibits chymotrypsin and kallikrein. This Homo sapiens (Human) protein is Plasma protease C1 inhibitor (SERPING1).